We begin with the raw amino-acid sequence, 96 residues long: Co-chaperonin GroES (96 aa).

The protein belongs to the GroES chaperonin family. As to quaternary structure, heptamer of 7 subunits arranged in a ring. Interacts with the chaperonin GroEL.

It is found in the cytoplasm. Together with the chaperonin GroEL, plays an essential role in assisting protein folding. The GroEL-GroES system forms a nano-cage that allows encapsulation of the non-native substrate proteins and provides a physical environment optimized to promote and accelerate protein folding. GroES binds to the apical surface of the GroEL ring, thereby capping the opening of the GroEL channel. This chain is Co-chaperonin GroES, found in Nitrosococcus oceani (strain ATCC 19707 / BCRC 17464 / JCM 30415 / NCIMB 11848 / C-107).